A 404-amino-acid chain; its full sequence is Cysteine desulfurase IscS (404 aa).

Pyridoxal 5'-phosphate contacts are provided by residues 75–76 (AT), N155, Q183, and 203–205 (SGH). An N6-(pyridoxal phosphate)lysine modification is found at K206. Pyridoxal 5'-phosphate is bound at residue T243. The active-site Cysteine persulfide intermediate is C328. C328 serves as a coordination point for [2Fe-2S] cluster.

Belongs to the class-V pyridoxal-phosphate-dependent aminotransferase family. NifS/IscS subfamily. In terms of assembly, homodimer. Forms a heterotetramer with IscU, interacts with other sulfur acceptors. Pyridoxal 5'-phosphate is required as a cofactor.

The protein resides in the cytoplasm. The catalysed reaction is (sulfur carrier)-H + L-cysteine = (sulfur carrier)-SH + L-alanine. The protein operates within cofactor biosynthesis; iron-sulfur cluster biosynthesis. Functionally, master enzyme that delivers sulfur to a number of partners involved in Fe-S cluster assembly, tRNA modification or cofactor biosynthesis. Catalyzes the removal of elemental sulfur atoms from cysteine to produce alanine. Functions as a sulfur delivery protein for Fe-S cluster synthesis onto IscU, an Fe-S scaffold assembly protein, as well as other S acceptor proteins. The chain is Cysteine desulfurase IscS from Shewanella frigidimarina (strain NCIMB 400).